Consider the following 548-residue polypeptide: MNKLIRRAVTIFAVTSVASLFASGVLETSMAESLSTNVISLADTKAKETTSHQKDRKARKNHQNRTSVVRKEVTAVRDTKAVEPRQDSCFGKMYTVKVNDDRNVEIVQSVPEYATVGSPYPIEITAIGKRDCVDVIITQQLPCEAEFVSSDPATTPTADGKLVWKIDRLGQGEKSKITVWVKPLKEGCCFTAATVCACPEIRSVTKCGQPAICVKQEGPESACLRCPVTYRINVVNQGTATARNVVVENPVPDGYAHASGQRVLTYTLGDMQPGEQRTITVEFCPLKRGRVTNIATVSYCGGHKNTASVTTVINEPCVQVNIEGADWSYVCKPVEYVISVSNPGDLVLRDVVIEDTLSPGITVVEAAGAQISCNKLVWTLKELNPGESLQYKVLVRAQTPGQFTNNVVVKSCSDCGICTSCAEATTYWKGVAATHMCVVDTCDPICVGENTVYRICVTNRGSAEDTNVSLILKFSKELQPISFSGPTKGTITGNTVVFDSLPRLGSKETVEFSVTLKAVSAGDARGEAILSSDTLTVPVSDTENTHIY.

The N-terminal stretch at 1–22 (MNKLIRRAVTIFAVTSVASLFA) is a signal peptide. Positions 23–40 (SGVLETSMAESLSTNVIS) are excised as a propeptide. The segment at 45–65 (KAKETTSHQKDRKARKNHQNR) is disordered. Positions 54–63 (KDRKARKNHQ) are enriched in basic residues.

Part of a disulfide cross-linked outer membrane complex (COMC) composed of the major outer membrane porin (MOMP), the small cysteine-rich protein (OmcA) and the large cysteine-rich periplasmic protein (OmcB).

It is found in the periplasm. Functionally, in elementary bodies (EBs, the infectious stage, which is able to survive outside the host cell) provides the structural integrity of the outer envelope through disulfide cross-links with the small cysteine-rich protein and the major outer membrane porin. It has been described in publications as the Sarkosyl-insoluble COMC (Chlamydia outer membrane complex), and serves as the functional equivalent of peptidoglycan. It is present but the disulfide bonds are reduced in reticulate bodies (RBs). The polypeptide is Large cysteine-rich periplasmic protein OmcB (omcB) (Chlamydia muridarum (strain MoPn / Nigg)).